The primary structure comprises 983 residues: Glycine dehydrogenase (decarboxylating) (983 aa).

At Lys-726 the chain carries N6-(pyridoxal phosphate)lysine.

This sequence belongs to the GcvP family. In terms of assembly, the glycine cleavage system is composed of four proteins: P, T, L and H. Pyridoxal 5'-phosphate serves as cofactor.

The catalysed reaction is N(6)-[(R)-lipoyl]-L-lysyl-[glycine-cleavage complex H protein] + glycine + H(+) = N(6)-[(R)-S(8)-aminomethyldihydrolipoyl]-L-lysyl-[glycine-cleavage complex H protein] + CO2. In terms of biological role, the glycine cleavage system catalyzes the degradation of glycine. The P protein binds the alpha-amino group of glycine through its pyridoxal phosphate cofactor; CO(2) is released and the remaining methylamine moiety is then transferred to the lipoamide cofactor of the H protein. The protein is Glycine dehydrogenase (decarboxylating) of Synechocystis sp. (strain ATCC 27184 / PCC 6803 / Kazusa).